The following is a 409-amino-acid chain: Tryptophan synthase beta chain (409 aa).

Residue K95 is modified to N6-(pyridoxal phosphate)lysine.

This sequence belongs to the TrpB family. In terms of assembly, tetramer of two alpha and two beta chains. Requires pyridoxal 5'-phosphate as cofactor.

It carries out the reaction (1S,2R)-1-C-(indol-3-yl)glycerol 3-phosphate + L-serine = D-glyceraldehyde 3-phosphate + L-tryptophan + H2O. Its pathway is amino-acid biosynthesis; L-tryptophan biosynthesis; L-tryptophan from chorismate: step 5/5. Its function is as follows. The beta subunit is responsible for the synthesis of L-tryptophan from indole and L-serine. This chain is Tryptophan synthase beta chain, found in Pseudomonas syringae pv. syringae (strain B728a).